The following is a 418-amino-acid chain: Glutamyl-tRNA reductase (418 aa).

Residues 49-52, serine 109, 114-116, and glutamine 120 contribute to the substrate site; these read TCNR and EPQ. Cysteine 50 acts as the Nucleophile in catalysis. Residue 189 to 194 coordinates NADP(+); sequence GAGETI.

Belongs to the glutamyl-tRNA reductase family. As to quaternary structure, homodimer.

It catalyses the reaction (S)-4-amino-5-oxopentanoate + tRNA(Glu) + NADP(+) = L-glutamyl-tRNA(Glu) + NADPH + H(+). Its pathway is porphyrin-containing compound metabolism; protoporphyrin-IX biosynthesis; 5-aminolevulinate from L-glutamyl-tRNA(Glu): step 1/2. Catalyzes the NADPH-dependent reduction of glutamyl-tRNA(Glu) to glutamate 1-semialdehyde (GSA). The chain is Glutamyl-tRNA reductase from Salmonella dublin (strain CT_02021853).